Consider the following 364-residue polypeptide: 3-dehydroquinate synthase (364 aa).

Residues 73 to 78 (DGEQNK), 107 to 111 (GVIGD), 131 to 132 (TT), Lys-144, Lys-153, and 171 to 174 (CLCT) contribute to the NAD(+) site. 3 residues coordinate Zn(2+): Glu-186, His-249, and His-266.

It belongs to the sugar phosphate cyclases superfamily. Dehydroquinate synthase family. NAD(+) is required as a cofactor. The cofactor is Co(2+). Requires Zn(2+) as cofactor.

It is found in the cytoplasm. It catalyses the reaction 7-phospho-2-dehydro-3-deoxy-D-arabino-heptonate = 3-dehydroquinate + phosphate. Its pathway is metabolic intermediate biosynthesis; chorismate biosynthesis; chorismate from D-erythrose 4-phosphate and phosphoenolpyruvate: step 2/7. Functionally, catalyzes the conversion of 3-deoxy-D-arabino-heptulosonate 7-phosphate (DAHP) to dehydroquinate (DHQ). The sequence is that of 3-dehydroquinate synthase from Blochmanniella floridana.